Reading from the N-terminus, the 338-residue chain is 4'-phosphopantetheinyl transferase (338 aa).

The protein belongs to the P-Pant transferase superfamily.

The enzyme catalyses apo-[ACP] + CoA = holo-[ACP] + adenosine 3',5'-bisphosphate + H(+). Its function is as follows. Acyl-carrier-protein synthase that transfers the 4'-phosphopantetheine moiety from coenzyme A to a Ser of an acyl-carrier-protein. The 4'-phosphopantetheine (4'-PPT) portion of CoA provides the essential prosthetic group for a number of carrier proteins and multi-domain enzymes, priming them for the acceptance of acyl building blocks in fatty acid synthesis and many aspects of secondary metabolism mediated by polyketide synthases (PKSs) and non-ribosomal peptide synthetases (NRPSs). Plays a key role in liamocins biosynthesis by activationg the HR-PKS PKS1 that produces 3,5-dihydroxydecanoic acid, a precursor of liamocins. The protein is 4'-phosphopantetheinyl transferase of Aureobasidium melanogenum (Aureobasidium pullulans var. melanogenum).